Here is a 591-residue protein sequence, read N- to C-terminus: Tricyclene synthase, chloroplastic (591 aa).

Residues 1 to 45 (MATLLQIGSGVIYSNALRKTLRRPQSSTCIIVTETTPCNKSPTVQ) constitute a chloroplast transit peptide. Arginine 302, aspartate 339, aspartate 343, arginine 481, and asparagine 484 together coordinate (2E)-geranyl diphosphate. Mg(2+) contacts are provided by aspartate 339 and aspartate 343. Positions 339–343 (DDIYD) match the DDXXD motif motif. Mg(2+) is bound by residues asparagine 484, threonine 488, and glutamate 492.

Belongs to the terpene synthase family. Tpsb subfamily. It depends on Mg(2+) as a cofactor. Requires Mn(2+) as cofactor. In terms of tissue distribution, predominantly expressed in flowers but also in leaves, siliques and in stems.

It is found in the plastid. The protein localises to the chloroplast stroma. The catalysed reaction is (2E)-geranyl diphosphate = beta-myrcene + diphosphate. It catalyses the reaction (2E)-geranyl diphosphate = tricyclene + diphosphate. The enzyme catalyses (2E)-geranyl diphosphate = (E)-beta-ocimene + diphosphate. It participates in secondary metabolite biosynthesis; terpenoid biosynthesis. In terms of biological role, involved in monoterpene (C10) biosynthesis. The major product is beta-myrcene (56%) followed by (E)-beta-ocimene (20%) and minor amounts (less than 5%) of the cyclic monoterpene (-)-limonene, (+)-limonene, 2-carene and tricyclene. The sequence is that of Tricyclene synthase, chloroplastic from Arabidopsis thaliana (Mouse-ear cress).